Here is a 503-residue protein sequence, read N- to C-terminus: Cobyric acid synthase (503 aa).

The 194-residue stretch at 260–453 folds into the GATase cobBQ-type domain; the sequence is KIGVAAIYFP…FHALFDESSV (194 aa). C341 serves as the catalytic Nucleophile. H445 is a catalytic residue.

This sequence belongs to the CobB/CobQ family. CobQ subfamily.

The protein operates within cofactor biosynthesis; adenosylcobalamin biosynthesis. Functionally, catalyzes amidations at positions B, D, E, and G on adenosylcobyrinic A,C-diamide. NH(2) groups are provided by glutamine, and one molecule of ATP is hydrogenolyzed for each amidation. The polypeptide is Cobyric acid synthase (Pelodictyon phaeoclathratiforme (strain DSM 5477 / BU-1)).